The sequence spans 1113 residues: Cytospin-A (1113 aa).

A disordered region spans residues 1–160; it reads MKKSVRPAAS…KSKSDGQISD (160 aa). Residues 59–103 are compositionally biased toward polar residues; the sequence is ASCNAVSKSKRTTSVGTTASTLDSKPKTASGTTSKRLASSLSKET. A compositionally biased stretch (basic and acidic residues) spans 145–154; sequence SEGRMSKSKS. Residues 220 to 259 adopt a coiled-coil conformation; sequence AADVESTLILLQEQNQAIREELNLLKSENRMLKDRLNALG. Positions 284–374 are disordered; the sequence is AGSGQSDGGG…RRGSSGNASE (91 aa). Residues 338 to 358 are compositionally biased toward low complexity; it reads SSDDALDAPSGASSSSESECA. 2 coiled-coil regions span residues 379–433 and 473–791; these read CLTE…MDSL and MELE…RGRV. Disordered stretches follow at residues 766-785, 832-902, 914-957, and 972-997; these read QEKN…RKQD, FDSA…PTYP, GSAA…DGAS, and ALAS…RKDP. Residues 834-845 show a composition bias toward low complexity; the sequence is SASQGPPSSGAS. The segment covering 856–867 has biased composition (pro residues); that stretch reads PRTPLSPSPMKT. Polar residues predominate over residues 925 to 940; the sequence is QRVSNMDSTKAISVSR. Basic and acidic residues predominate over residues 941–951; sequence RSSEEMKRDMA. Residues 972-981 show a composition bias toward low complexity; that stretch reads ALASSSPTAS. A Calponin-homology (CH) domain is found at 1007–1112; that stretch reads GSKRNALLKW…YVTAIYKYFE (106 aa).

The protein belongs to the cytospin-A family. May interact with both microtubules and actin cytoskeleton.

The protein localises to the cytoplasm. The protein resides in the cytoskeleton. Its subcellular location is the spindle. It localises to the cell junction. It is found in the gap junction. Its function is as follows. Involved in cytokinesis and spindle organization. May play a role in actin cytoskeleton organization and microtubule stabilization and hence required for proper cell adhesion and migration. The protein is Cytospin-A (specc1l) of Tetraodon nigroviridis (Spotted green pufferfish).